The sequence spans 878 residues: Bifunctional heparan sulfate N-deacetylase/N-sulfotransferase 1 (878 aa).

The Cytoplasmic portion of the chain corresponds to 1 to 17 (MSLSLKTRRFGRPVRPQ). The segment at 1-169 (MSLSLKTRRF…VEYGVGIIGF (169 aa)) is sufficient for localization to Golgi membrane. Residues 18–38 (LVLLLLFALCLLSVFISAYYL) form a helical; Signal-anchor for type II membrane protein membrane-spanning segment. At 39-878 (YGWKRGLEPS…WLREELQSTR (840 aa)) the chain is on the lumenal side. Positions 40–594 (GWKRGLEPSG…KRHKDIWSKE (555 aa)) are heparan sulfate N-deacetylase 1. The interval 47–71 (PSGSEAQSPDCDEPKISPSRLLPMK) is disordered. Residues Asn-231, Asn-347, and Asn-397 are each glycosylated (N-linked (GlcNAc...) asparagine). A heparan sulfate N-sulfotransferase 1 region spans residues 595-878 (KTCDRFPKLL…WLREELQSTR (284 aa)). Lys-610 functions as the For sulfotransferase activity in the catalytic mechanism. Adenosine 3',5'-bisphosphate is bound at residue 610–614 (KTGTT). A glycan (N-linked (GlcNAc...) asparagine) is linked at Asn-663. Ser-708 and Trp-813 together coordinate adenosine 3',5'-bisphosphate. Residues Cys-814 and Cys-824 are joined by a disulfide bond. 829–833 (KGRKY) is an adenosine 3',5'-bisphosphate binding site.

It belongs to the sulfotransferase 1 family. NDST subfamily. Monomer.

The protein localises to the golgi apparatus membrane. The protein resides in the golgi apparatus. Its subcellular location is the trans-Golgi network membrane. It carries out the reaction alpha-D-glucosaminyl-[heparan sulfate](n) + 3'-phosphoadenylyl sulfate = N-sulfo-alpha-D-glucosaminyl-[heparan sulfate](n) + adenosine 3',5'-bisphosphate + 2 H(+). Its pathway is glycan metabolism; heparan sulfate biosynthesis. The protein operates within glycan metabolism; heparin biosynthesis. Essential bifunctional enzyme that catalyzes both the N-deacetylation and the N-sulfation of glucosamine (GlcNAc) of the glycosaminoglycan in heparan sulfate. Modifies the GlcNAc-GlcA disaccharide repeating sugar backbone to make N-sulfated heparosan, a prerequisite substrate for later modifications in heparin biosynthesis. Plays a role in determining the extent and pattern of sulfation of heparan sulfate. In Xenopus tropicalis (Western clawed frog), this protein is Bifunctional heparan sulfate N-deacetylase/N-sulfotransferase 1 (ndst1).